A 443-amino-acid polypeptide reads, in one-letter code: Deoxyguanosinetriphosphate triphosphohydrolase-like protein (443 aa).

The HD domain occupies 66–259 (RLTHSLEAAQ…MELADDIAYG (194 aa)).

The protein belongs to the dGTPase family. Type 2 subfamily.

The protein is Deoxyguanosinetriphosphate triphosphohydrolase-like protein of Vibrio vulnificus (strain CMCP6).